A 343-amino-acid polypeptide reads, in one-letter code: Holliday junction branch migration complex subunit RuvB (343 aa).

The segment at 1 to 181 (MDRIIDTAAT…FGIVQRLEFY (181 aa)) is large ATPase domain (RuvB-L). Residues Ile20, Arg21, Gly62, Lys65, Thr66, Thr67, 128 to 130 (EDF), Arg171, Tyr181, and Arg218 each bind ATP. Mg(2+) is bound at residue Thr66. Residues 182 to 252 (SPEDLARIVR…VAQAAMQMLK (71 aa)) form a small ATPAse domain (RuvB-S) region. Positions 255–343 (QGGFDELDRR…SAFTDPEDLF (89 aa)) are head domain (RuvB-H). Arg291, Arg310, and Arg315 together coordinate DNA.

This sequence belongs to the RuvB family. In terms of assembly, homohexamer. Forms an RuvA(8)-RuvB(12)-Holliday junction (HJ) complex. HJ DNA is sandwiched between 2 RuvA tetramers; dsDNA enters through RuvA and exits via RuvB. An RuvB hexamer assembles on each DNA strand where it exits the tetramer. Each RuvB hexamer is contacted by two RuvA subunits (via domain III) on 2 adjacent RuvB subunits; this complex drives branch migration. In the full resolvosome a probable DNA-RuvA(4)-RuvB(12)-RuvC(2) complex forms which resolves the HJ.

It localises to the cytoplasm. The enzyme catalyses ATP + H2O = ADP + phosphate + H(+). Functionally, the RuvA-RuvB-RuvC complex processes Holliday junction (HJ) DNA during genetic recombination and DNA repair, while the RuvA-RuvB complex plays an important role in the rescue of blocked DNA replication forks via replication fork reversal (RFR). RuvA specifically binds to HJ cruciform DNA, conferring on it an open structure. The RuvB hexamer acts as an ATP-dependent pump, pulling dsDNA into and through the RuvAB complex. RuvB forms 2 homohexamers on either side of HJ DNA bound by 1 or 2 RuvA tetramers; 4 subunits per hexamer contact DNA at a time. Coordinated motions by a converter formed by DNA-disengaged RuvB subunits stimulates ATP hydrolysis and nucleotide exchange. Immobilization of the converter enables RuvB to convert the ATP-contained energy into a lever motion, pulling 2 nucleotides of DNA out of the RuvA tetramer per ATP hydrolyzed, thus driving DNA branch migration. The RuvB motors rotate together with the DNA substrate, which together with the progressing nucleotide cycle form the mechanistic basis for DNA recombination by continuous HJ branch migration. Branch migration allows RuvC to scan DNA until it finds its consensus sequence, where it cleaves and resolves cruciform DNA. This chain is Holliday junction branch migration complex subunit RuvB, found in Xylella fastidiosa (strain 9a5c).